The following is a 299-amino-acid chain: MAAAEGGCGAGVEADRELEELLESALDDFDKAKPSPAPSPTISAPDASGPQKRSPGDTAKDALFASQEKFFQELFDSELASQATAEFEKAMKELAEEEPHLVEQFQKLSEAAGRVGSDASSQQEFTSCLKETLSGLAKNATDLQNSGMSEEELTKAMEGLGMDEGDGEGNILPIMQSLMQNLLSKDVLYPSLKEITEKYPEWLQSHQESIPPEQFEKYQQQHSVMGKICEQFEAETPTDSEATHRARFEAVLDLMQQLQDLGHPPKELAGEMPPGLNFDLDALNLSGPPGANGEQCLIM.

Position 2 is an N-acetylalanine (A2). Residues 2–56 are docking to the peroxisome membrane and binding to PEX3; the sequence is AAAEGGCGAGVEADRELEELLESALDDFDKAKPSPAPSPTISAPDASGPQKRSPG. The interval 2–91 is necessary for PEX19 function on peroxisome biogenesis; the sequence is AAAEGGCGAG…QATAEFEKAM (90 aa). The tract at residues 25-63 is disordered; it reads ALDDFDKAKPSPAPSPTISAPDASGPQKRSPGDTAKDAL. A phosphoserine mark is found at S35, S39, S54, and S66. T236 is subject to Phosphothreonine. C296 is modified (cysteine methyl ester). C296 carries S-farnesyl cysteine lipidation. The propeptide at 297–299 is removed in mature form; that stretch reads LIM.

The protein belongs to the peroxin-19 family. As to quaternary structure, interacts with a broad range of peroxisomal membrane proteins, including PEX3, PEX10, PEX11A, PEX11B, PEX12, PEX13, PEX14 and PEX16, PXMP2/PMP22, PXMP4/PMP24, SLC25A17/PMP34, ABCD1/ALDP, ABCD2/ALDRP, and ABCD3/PMP70. Also interacts with the tumor suppressor CDKN2A/p19ARF.

It localises to the cytoplasm. The protein localises to the peroxisome membrane. In terms of biological role, necessary for early peroxisomal biogenesis. Acts both as a cytosolic chaperone and as an import receptor for peroxisomal membrane proteins (PMPs). Binds and stabilizes newly synthesized PMPs in the cytoplasm by interacting with their hydrophobic membrane-spanning domains, and targets them to the peroxisome membrane by binding to the integral membrane protein PEX3. Excludes CDKN2A from the nucleus and prevents its interaction with MDM2, which results in active degradation of TP53. The protein is Peroxisomal biogenesis factor 19 (Pex19) of Rattus norvegicus (Rat).